The primary structure comprises 671 residues: DNA ligase (671 aa).

NAD(+)-binding positions include 32-36, 81-82, and Glu113; these read DAEYD and SL. The active-site N6-AMP-lysine intermediate is the Lys115. NAD(+) contacts are provided by Arg136, Glu173, Lys290, and Lys314. 4 residues coordinate Zn(2+): Cys408, Cys411, Cys426, and Cys432. The 79-residue stretch at 593-671 folds into the BRCT domain; that stretch reads EIDSPFAGKT…EAEMIRLLGA (79 aa).

It belongs to the NAD-dependent DNA ligase family. LigA subfamily. Requires Mg(2+) as cofactor. Mn(2+) is required as a cofactor.

It catalyses the reaction NAD(+) + (deoxyribonucleotide)n-3'-hydroxyl + 5'-phospho-(deoxyribonucleotide)m = (deoxyribonucleotide)n+m + AMP + beta-nicotinamide D-nucleotide.. In terms of biological role, DNA ligase that catalyzes the formation of phosphodiester linkages between 5'-phosphoryl and 3'-hydroxyl groups in double-stranded DNA using NAD as a coenzyme and as the energy source for the reaction. It is essential for DNA replication and repair of damaged DNA. In Salmonella paratyphi A (strain ATCC 9150 / SARB42), this protein is DNA ligase.